The chain runs to 688 residues: Glycine--tRNA ligase beta subunit (688 aa).

This sequence belongs to the class-II aminoacyl-tRNA synthetase family. As to quaternary structure, tetramer of two alpha and two beta subunits.

It localises to the cytoplasm. It carries out the reaction tRNA(Gly) + glycine + ATP = glycyl-tRNA(Gly) + AMP + diphosphate. The sequence is that of Glycine--tRNA ligase beta subunit (glyS) from Haemophilus influenzae (strain ATCC 51907 / DSM 11121 / KW20 / Rd).